A 273-amino-acid chain; its full sequence is 2,3,4,5-tetrahydropyridine-2,6-dicarboxylate N-succinyltransferase (273 aa).

The protein belongs to the transferase hexapeptide repeat family.

It localises to the cytoplasm. The enzyme catalyses (S)-2,3,4,5-tetrahydrodipicolinate + succinyl-CoA + H2O = (S)-2-succinylamino-6-oxoheptanedioate + CoA. Its pathway is amino-acid biosynthesis; L-lysine biosynthesis via DAP pathway; LL-2,6-diaminopimelate from (S)-tetrahydrodipicolinate (succinylase route): step 1/3. The sequence is that of 2,3,4,5-tetrahydropyridine-2,6-dicarboxylate N-succinyltransferase from Acinetobacter baumannii (strain AB307-0294).